Consider the following 152-residue polypeptide: Transposase for insertion sequence element IS200 (152 aa).

Positions 61 and 63 each coordinate Mg(2+). Tyr125 acts as the Nucleophile in catalysis. Gln129 contacts Mg(2+).

This sequence belongs to the transposase 17 family. As to quaternary structure, homodimer. Mg(2+) is required as a cofactor.

Its function is as follows. Transposase responsible for transposition of the IS200 insertion sequence (IS) element. Transposition occurs in 2 main steps, excision from the donor DNA 'top strand' into a single strand circle and its subsequent reinsertion into the DNA target. This increases the copy number of the IS. This Salmonella typhi protein is Transposase for insertion sequence element IS200 (tnpA1).